Here is a 591-residue protein sequence, read N- to C-terminus: Protein NRT1/ PTR FAMILY 4.3 (591 aa).

Over residues methionine 1–lysine 10 the composition is skewed to polar residues. The disordered stretch occupies residues methionine 1 to asparagine 38. 12 consecutive transmembrane segments (helical) span residues alanine 47–asparagine 67, alanine 85–leucine 105, phenylalanine 109–leucine 129, glycine 157–valine 177, phenylalanine 204–tryptophan 224, isoleucine 233–threonine 253, leucine 347–leucine 367, alanine 395–phenylalanine 415, leucine 429–leucine 449, isoleucine 463–threonine 483, phenylalanine 502–valine 522, and leucine 551–serine 571.

It belongs to the major facilitator superfamily. Proton-dependent oligopeptide transporter (POT/PTR) (TC 2.A.17) family. As to expression, expressed in flowers. Detected in roots and siliques.

The protein resides in the membrane. The chain is Protein NRT1/ PTR FAMILY 4.3 (NPF4.3) from Arabidopsis thaliana (Mouse-ear cress).